Reading from the N-terminus, the 213-residue chain is Large ribosomal subunit protein uL4 (213 aa).

Positions 51 to 90 (TASTLTKAEVRGGGRKPYKQKHTGRARQGSIRNPHYVGGG) are disordered. Basic residues predominate over residues 63–75 (GGRKPYKQKHTGR).

This sequence belongs to the universal ribosomal protein uL4 family. In terms of assembly, part of the 50S ribosomal subunit.

One of the primary rRNA binding proteins, this protein initially binds near the 5'-end of the 23S rRNA. It is important during the early stages of 50S assembly. It makes multiple contacts with different domains of the 23S rRNA in the assembled 50S subunit and ribosome. In terms of biological role, forms part of the polypeptide exit tunnel. In Malacoplasma penetrans (strain HF-2) (Mycoplasma penetrans), this protein is Large ribosomal subunit protein uL4.